The sequence spans 92 residues: MTRSIKKGPFVDAHLQKKVDEQNAKGTHNVIKTWSRRSMITPDFIGHTFAVHDGRKHVPVFVTESMVGHKLGEFAPTRTFKGHVKDDKKSRR.

It belongs to the universal ribosomal protein uS19 family.

In terms of biological role, protein S19 forms a complex with S13 that binds strongly to the 16S ribosomal RNA. The chain is Small ribosomal subunit protein uS19 from Bifidobacterium animalis subsp. lactis (strain AD011).